The sequence spans 534 residues: CTP synthase (534 aa).

Positions 1 to 266 are amidoligase domain; sequence MKQKFIFVTG…DELIVARLGL (266 aa). A CTP-binding site is contributed by Ser14. Ser14 serves as a coordination point for UTP. Residues 15–20 and Asp72 contribute to the ATP site; that span reads SIGKGL. Positions 72 and 140 each coordinate Mg(2+). CTP is bound by residues 147-149, 187-192, and Lys223; these read DIE and KSKPTQ. UTP contacts are provided by residues 187 to 192 and Lys223; that span reads KSKPTQ. The Glutamine amidotransferase type-1 domain occupies 291 to 534; that stretch reads KIGVVGKYVD…HFVKASLKKK (244 aa). Gly353 is a binding site for L-glutamine. Cys380 acts as the Nucleophile; for glutamine hydrolysis in catalysis. L-glutamine-binding positions include 381–384, Glu404, and Arg464; that span reads FGMQ. Catalysis depends on residues His509 and Glu511.

This sequence belongs to the CTP synthase family. Homotetramer.

It catalyses the reaction UTP + L-glutamine + ATP + H2O = CTP + L-glutamate + ADP + phosphate + 2 H(+). It carries out the reaction L-glutamine + H2O = L-glutamate + NH4(+). The enzyme catalyses UTP + NH4(+) + ATP = CTP + ADP + phosphate + 2 H(+). It functions in the pathway pyrimidine metabolism; CTP biosynthesis via de novo pathway; CTP from UDP: step 2/2. Its activity is regulated as follows. Allosterically activated by GTP, when glutamine is the substrate; GTP has no effect on the reaction when ammonia is the substrate. The allosteric effector GTP functions by stabilizing the protein conformation that binds the tetrahedral intermediate(s) formed during glutamine hydrolysis. Inhibited by the product CTP, via allosteric rather than competitive inhibition. Functionally, catalyzes the ATP-dependent amination of UTP to CTP with either L-glutamine or ammonia as the source of nitrogen. Regulates intracellular CTP levels through interactions with the four ribonucleotide triphosphates. The chain is CTP synthase from Bdellovibrio bacteriovorus (strain ATCC 15356 / DSM 50701 / NCIMB 9529 / HD100).